A 253-amino-acid chain; its full sequence is uncharacterized protein (253 aa).

This is an uncharacterized protein from Ostreid herpesvirus 1 (isolate France) (OsHV-1).